A 241-amino-acid polypeptide reads, in one-letter code: Pyridoxine 5'-phosphate synthase (241 aa).

Residue asparagine 10 participates in 3-amino-2-oxopropyl phosphate binding. Residue 12 to 13 (DH) coordinates 1-deoxy-D-xylulose 5-phosphate. Arginine 21 provides a ligand contact to 3-amino-2-oxopropyl phosphate. Catalysis depends on histidine 48, which acts as the Proton acceptor. 1-deoxy-D-xylulose 5-phosphate is bound by residues arginine 50 and histidine 55. Glutamate 75 acts as the Proton acceptor in catalysis. Threonine 105 is a binding site for 1-deoxy-D-xylulose 5-phosphate. Histidine 195 acts as the Proton donor in catalysis. Residues glycine 196 and 217–218 (GH) each bind 3-amino-2-oxopropyl phosphate.

The protein belongs to the PNP synthase family. Homooctamer; tetramer of dimers.

The protein localises to the cytoplasm. It catalyses the reaction 3-amino-2-oxopropyl phosphate + 1-deoxy-D-xylulose 5-phosphate = pyridoxine 5'-phosphate + phosphate + 2 H2O + H(+). It participates in cofactor biosynthesis; pyridoxine 5'-phosphate biosynthesis; pyridoxine 5'-phosphate from D-erythrose 4-phosphate: step 5/5. Functionally, catalyzes the complicated ring closure reaction between the two acyclic compounds 1-deoxy-D-xylulose-5-phosphate (DXP) and 3-amino-2-oxopropyl phosphate (1-amino-acetone-3-phosphate or AAP) to form pyridoxine 5'-phosphate (PNP) and inorganic phosphate. The polypeptide is Pyridoxine 5'-phosphate synthase (Bdellovibrio bacteriovorus (strain ATCC 15356 / DSM 50701 / NCIMB 9529 / HD100)).